The sequence spans 828 residues: MHKIEQKWQKIWKEEKAFQVSNDSSKPKYYVLEMLPYPSGKIHIGHIRNYSIGDVIARFMTMQGFNVLHPMGWDAFGLPAENAAIQNNSRPQDWTYSNIEYMKKQLQSMGFSYDWTREINSCDPQYYKHEQKFFLELYDRDLVYQKESLVNWDPVDNTVLANEQVVNGRGWRSGAIIEKRYLNQWFLKITNYAEELLNEIQNLKDWPEAVRVMQEEWIGKSTGVNFHFKIKYHENSTIEVFSTKPETIFGASFIGIAFNHPIIEQLIFKTDEIANFITKCSYITKSSELEKSEKEGVFTGLYVIHPFDANIILPVIITNFVLMDYGTGAIFGCPAHDKRDHELAMKMNLPIKKVIGTDNTQEEVLINSDWLNGLTSSEAKQKVISKFETLGIGKRSVNYRLKDWGISRQRFWGCPIPIIYCETCGIVPVPYKDLPVTLPDDVSFDNNYNPLEHHPSWKHVNCPKCDNHAIRETDTFDTFFESSWYFTRYCNNNAVEMTDSKACNYWLPVDKYIGGIEHAVMHLLYARFFTKLMNEHHYVSIREPFKGLFTQGMVLHATYKDENNNWLYPAEVVKNGNEFFHKETNTRVVQGRIEKMSKSKKNIIDLETIQEQYSADAIRLFVLSDSPPEKDLQWSASGIEGCSRFIHKLDNMFEVISSLKDDMNNEINTELNRLIHFTIKHVADDIKTFSLNRAIARMRTLTNAIYCEISKDKIDVRTIKYGFNVLIQLLNPFIPHITEEIWQKLGNKERLYKSVFAEFDDSMLEFSTYIMAVQVNGKLRDTYEFNTDISEDEVKQITVNLPKIQKFLAGKEPNKIILVPRKIVNIII.

A 'HIGH' region motif is present at residues 36–46 (PYPSGKIHIGH). The 'KMSKS' region signature appears at 595–599 (KMSKS). Residue lysine 598 participates in ATP binding.

Belongs to the class-I aminoacyl-tRNA synthetase family.

The protein localises to the cytoplasm. The catalysed reaction is tRNA(Leu) + L-leucine + ATP = L-leucyl-tRNA(Leu) + AMP + diphosphate. The chain is Leucine--tRNA ligase from Rickettsia typhi (strain ATCC VR-144 / Wilmington).